Consider the following 804-residue polypeptide: Leucine--tRNA ligase (804 aa).

Residues 40 to 51 (PYPSGAGLHVGH) carry the 'HIGH' region motif. Positions 576–580 (KMSKS) match the 'KMSKS' region motif. K579 contributes to the ATP binding site.

This sequence belongs to the class-I aminoacyl-tRNA synthetase family.

Its subcellular location is the cytoplasm. It carries out the reaction tRNA(Leu) + L-leucine + ATP = L-leucyl-tRNA(Leu) + AMP + diphosphate. In Staphylococcus aureus (strain bovine RF122 / ET3-1), this protein is Leucine--tRNA ligase.